Reading from the N-terminus, the 118-residue chain is Small ribosomal subunit protein uS13 (118 aa).

The segment at 94 to 118 (GLPVRGQRTKTNARTRKGPRKPIKK) is disordered.

This sequence belongs to the universal ribosomal protein uS13 family. As to quaternary structure, part of the 30S ribosomal subunit. Forms a loose heterodimer with protein S19. Forms two bridges to the 50S subunit in the 70S ribosome.

In terms of biological role, located at the top of the head of the 30S subunit, it contacts several helices of the 16S rRNA. In the 70S ribosome it contacts the 23S rRNA (bridge B1a) and protein L5 of the 50S subunit (bridge B1b), connecting the 2 subunits; these bridges are implicated in subunit movement. Contacts the tRNAs in the A and P-sites. This chain is Small ribosomal subunit protein uS13, found in Tolumonas auensis (strain DSM 9187 / NBRC 110442 / TA 4).